Consider the following 272-residue polypeptide: tRNA pseudouridine synthase A (272 aa).

D52 acts as the Nucleophile in catalysis. A substrate-binding site is contributed by Y110.

The protein belongs to the tRNA pseudouridine synthase TruA family. Homodimer.

The catalysed reaction is uridine(38/39/40) in tRNA = pseudouridine(38/39/40) in tRNA. Formation of pseudouridine at positions 38, 39 and 40 in the anticodon stem and loop of transfer RNAs. The chain is tRNA pseudouridine synthase A from Cupriavidus necator (strain ATCC 17699 / DSM 428 / KCTC 22496 / NCIMB 10442 / H16 / Stanier 337) (Ralstonia eutropha).